Consider the following 224-residue polypeptide: Putative adhesin A1G_07050 (224 aa).

Positions 1-22 (MKKLLLIAATSATILSSSVSFA) are cleaved as a signal peptide.

The chain is Putative adhesin A1G_07050 from Rickettsia rickettsii (strain Sheila Smith).